A 192-amino-acid chain; its full sequence is tRNA (pseudouridine(54)-N(1))-methyltransferase (192 aa).

Positions 127 and 181 each coordinate S-adenosyl-L-methionine.

Belongs to the methyltransferase superfamily. TrmY family. As to quaternary structure, homodimer.

It localises to the cytoplasm. The enzyme catalyses pseudouridine(54) in tRNA + S-adenosyl-L-methionine = N(1)-methylpseudouridine(54) in tRNA + S-adenosyl-L-homocysteine + H(+). Its function is as follows. Specifically catalyzes the N1-methylation of pseudouridine at position 54 (Psi54) in tRNAs. This is tRNA (pseudouridine(54)-N(1))-methyltransferase from Methanocella arvoryzae (strain DSM 22066 / NBRC 105507 / MRE50).